Here is a 256-residue protein sequence, read N- to C-terminus: Fructose-1,6-bisphosphatase/inositol-1-monophosphatase (256 aa).

Residues glutamate 67, aspartate 83, leucine 85, and aspartate 86 each contribute to the Mg(2+) site. Residues 86–88 (DGS), arginine 170, isoleucine 175, and arginine 194 contribute to the substrate site. Aspartate 201 provides a ligand contact to Mg(2+).

This sequence belongs to the inositol monophosphatase superfamily. FBPase class 4 family. As to quaternary structure, homodimer. The cofactor is Mg(2+).

It catalyses the reaction beta-D-fructose 1,6-bisphosphate + H2O = beta-D-fructose 6-phosphate + phosphate. The enzyme catalyses a myo-inositol phosphate + H2O = myo-inositol + phosphate. Its function is as follows. Phosphatase with broad specificity; it can dephosphorylate fructose 1,6-bisphosphate (FBP) and inositol-1-phosphate (IMP). However, while possessing a high FBPase activity in vitro, does not participate in gluconeogenesis in vivo. This is Fructose-1,6-bisphosphatase/inositol-1-monophosphatase (suhB) from Thermococcus kodakarensis (strain ATCC BAA-918 / JCM 12380 / KOD1) (Pyrococcus kodakaraensis (strain KOD1)).